The chain runs to 68 residues: Large ribosomal subunit protein uL29 (68 aa).

The protein belongs to the universal ribosomal protein uL29 family.

This Leuconostoc citreum (strain KM20) protein is Large ribosomal subunit protein uL29.